Consider the following 482-residue polypeptide: MKFIIKLFPEITIKSQSVRLRFIKILTGNIRNVLKHYDETLAVVRHWDNIEVRARDENQRLAIRDALTRIPGIHHILEVEDVPFTDMHDIFEKALVQYRDRLEGKTFCVRVKRRGKHEFSSIEVERYVGGGLNQHIESARVKLTNPDVTVHLEVEDDRLLLIKGRYEGIGGFPIGTQEDVLSLISGGFDSGVSSYMLMRRGCRVHYCFFNLGGAAHEIGVRQVAHYLWNRFGSSHRVRFVAINFEPVVGEILEKVDDGQMGVVLKRMMVRAASKVAERYGVQALVTGEALGQVSSQTLTNLRLIDNVSDTLILRPLISYDKEHIINLARQIGTEDFARTMPEYCGVISKSPTVKAIKAKIEAEEEHFDFSILDKVVEEASNVDIREIAQQTGQDVVEVETVSGFGPNDVILDIRSVDEQDDKPLKIEGVDVVSLPFYKLSTKFGDLDQSKTWLLWCERGVMSRLQALYLREQGFQNVKVYRP.

Positions 61–165 (LAIRDALTRI…DDRLLLIKGR (105 aa)) constitute a THUMP domain. ATP-binding positions include 183 to 184 (LI), K265, G287, and Q296. A disulfide bridge connects residues C344 and C456. The 79-residue stretch at 404–482 (FGPNDVILDI…GFQNVKVYRP (79 aa)) folds into the Rhodanese domain. The Cysteine persulfide intermediate role is filled by C456.

Belongs to the ThiI family.

Its subcellular location is the cytoplasm. It carries out the reaction [ThiI sulfur-carrier protein]-S-sulfanyl-L-cysteine + a uridine in tRNA + 2 reduced [2Fe-2S]-[ferredoxin] + ATP + H(+) = [ThiI sulfur-carrier protein]-L-cysteine + a 4-thiouridine in tRNA + 2 oxidized [2Fe-2S]-[ferredoxin] + AMP + diphosphate. It catalyses the reaction [ThiS sulfur-carrier protein]-C-terminal Gly-Gly-AMP + S-sulfanyl-L-cysteinyl-[cysteine desulfurase] + AH2 = [ThiS sulfur-carrier protein]-C-terminal-Gly-aminoethanethioate + L-cysteinyl-[cysteine desulfurase] + A + AMP + 2 H(+). It functions in the pathway cofactor biosynthesis; thiamine diphosphate biosynthesis. Catalyzes the ATP-dependent transfer of a sulfur to tRNA to produce 4-thiouridine in position 8 of tRNAs, which functions as a near-UV photosensor. Also catalyzes the transfer of sulfur to the sulfur carrier protein ThiS, forming ThiS-thiocarboxylate. This is a step in the synthesis of thiazole, in the thiamine biosynthesis pathway. The sulfur is donated as persulfide by IscS. The chain is tRNA sulfurtransferase from Citrobacter koseri (strain ATCC BAA-895 / CDC 4225-83 / SGSC4696).